Reading from the N-terminus, the 674-residue chain is Probable copper-transporting P-type ATPase B (674 aa).

The segment at 1–22 (MNHSNQMHHDNHESHNHHSGHA) is disordered. Basic and acidic residues predominate over residues 7–16 (MHHDNHESHN). A run of 6 helical transmembrane segments spans residues 32–52 (FFVS…MGVN), 57–77 (FTFP…FFYG), 95–115 (GMMT…LYAF), 127–147 (TMDF…GHWI), 284–304 (GYLF…WMLI), and 315–335 (LVTV…PLVT). Asp367 functions as the 4-aspartylphosphate intermediate in the catalytic mechanism. Residues Asp565 and Asp569 each contribute to the Mg(2+) site. 2 consecutive transmembrane segments (helical) span residues 623–645 (LWWG…AFIG) and 649–671 (SPAI…AFTL).

The protein belongs to the cation transport ATPase (P-type) (TC 3.A.3) family. Type IB subfamily.

It localises to the cell membrane. The enzyme catalyses Cu(+)(in) + ATP + H2O = Cu(+)(out) + ADP + phosphate + H(+). In terms of biological role, involved in copper transport. This chain is Probable copper-transporting P-type ATPase B (copB), found in Staphylococcus epidermidis (strain ATCC 35984 / DSM 28319 / BCRC 17069 / CCUG 31568 / BM 3577 / RP62A).